The following is a 595-amino-acid chain: Elongation factor 4 (595 aa).

The region spanning 2-184 (SHIRNFSIIA…RLVATIPPPT (183 aa)) is the tr-type G domain. GTP contacts are provided by residues 14–19 (DHGKST) and 131–134 (NKMD).

The protein belongs to the TRAFAC class translation factor GTPase superfamily. Classic translation factor GTPase family. LepA subfamily.

Its subcellular location is the cell inner membrane. It carries out the reaction GTP + H2O = GDP + phosphate + H(+). In terms of biological role, required for accurate and efficient protein synthesis under certain stress conditions. May act as a fidelity factor of the translation reaction, by catalyzing a one-codon backward translocation of tRNAs on improperly translocated ribosomes. Back-translocation proceeds from a post-translocation (POST) complex to a pre-translocation (PRE) complex, thus giving elongation factor G a second chance to translocate the tRNAs correctly. Binds to ribosomes in a GTP-dependent manner. The polypeptide is Elongation factor 4 (Pseudomonas syringae pv. tomato (strain ATCC BAA-871 / DC3000)).